The sequence spans 477 residues: Aspartyl/glutamyl-tRNA(Asn/Gln) amidotransferase subunit B (477 aa).

Belongs to the GatB/GatE family. GatB subfamily. As to quaternary structure, heterotrimer of A, B and C subunits.

The catalysed reaction is L-glutamyl-tRNA(Gln) + L-glutamine + ATP + H2O = L-glutaminyl-tRNA(Gln) + L-glutamate + ADP + phosphate + H(+). It carries out the reaction L-aspartyl-tRNA(Asn) + L-glutamine + ATP + H2O = L-asparaginyl-tRNA(Asn) + L-glutamate + ADP + phosphate + 2 H(+). In terms of biological role, allows the formation of correctly charged Asn-tRNA(Asn) or Gln-tRNA(Gln) through the transamidation of misacylated Asp-tRNA(Asn) or Glu-tRNA(Gln) in organisms which lack either or both of asparaginyl-tRNA or glutaminyl-tRNA synthetases. The reaction takes place in the presence of glutamine and ATP through an activated phospho-Asp-tRNA(Asn) or phospho-Glu-tRNA(Gln). The protein is Aspartyl/glutamyl-tRNA(Asn/Gln) amidotransferase subunit B of Coxiella burnetii (strain RSA 493 / Nine Mile phase I).